A 583-amino-acid polypeptide reads, in one-letter code: 2-succinyl-5-enolpyruvyl-6-hydroxy-3-cyclohexene-1-carboxylate synthase (583 aa).

The protein belongs to the TPP enzyme family. MenD subfamily. Homodimer. The cofactor is Mg(2+). Mn(2+) serves as cofactor. Requires thiamine diphosphate as cofactor.

It carries out the reaction isochorismate + 2-oxoglutarate + H(+) = 5-enolpyruvoyl-6-hydroxy-2-succinyl-cyclohex-3-ene-1-carboxylate + CO2. It participates in quinol/quinone metabolism; 1,4-dihydroxy-2-naphthoate biosynthesis; 1,4-dihydroxy-2-naphthoate from chorismate: step 2/7. Its pathway is quinol/quinone metabolism; menaquinone biosynthesis. In terms of biological role, catalyzes the thiamine diphosphate-dependent decarboxylation of 2-oxoglutarate and the subsequent addition of the resulting succinic semialdehyde-thiamine pyrophosphate anion to isochorismate to yield 2-succinyl-5-enolpyruvyl-6-hydroxy-3-cyclohexene-1-carboxylate (SEPHCHC). This Roseiflexus sp. (strain RS-1) protein is 2-succinyl-5-enolpyruvyl-6-hydroxy-3-cyclohexene-1-carboxylate synthase.